A 215-amino-acid chain; its full sequence is LysM and putative peptidoglycan-binding domain-containing protein 2 (215 aa).

Positions 1 to 40 (MADSSPALSLREGGPRAPRPSAPSPPPRSRSGSESEEAEL) are disordered. The residue at position 2 (A2) is an N-acetylalanine. Phosphoserine is present on residues S5, S24, S33, and S57. Residues 17-28 (APRPSAPSPPPR) are compositionally biased toward pro residues. The LysM domain occupies 71-115 (VEHRVRAGDTLQGIALKYGVTMEQIKRANKLFTNDCIFLKKTLNI). 2 disordered regions span residues 132–175 (DSPE…EEVS) and 193–215 (AAKKLKEESRDEESPYATSLYHS). The span at 196 to 205 (KLKEESRDEE) shows a compositional bias: basic and acidic residues.

The sequence is that of LysM and putative peptidoglycan-binding domain-containing protein 2 (LYSMD2) from Homo sapiens (Human).